Consider the following 235-residue polypeptide: Thiamine import ATP-binding protein ThiQ (235 aa).

One can recognise an ABC transporter domain in the interval 2–230 (LKLIDITWLY…QASASALLGI (229 aa)). Residue 32 to 39 (GPSGAGKS) coordinates ATP.

The protein belongs to the ABC transporter superfamily. Thiamine importer (TC 3.A.1.19.1) family. In terms of assembly, the complex is composed of two ATP-binding proteins (ThiQ), two transmembrane proteins (ThiP) and a solute-binding protein (ThiB).

The protein resides in the cell inner membrane. It carries out the reaction thiamine(out) + ATP + H2O = thiamine(in) + ADP + phosphate + H(+). Functionally, part of the ABC transporter complex ThiBPQ involved in thiamine import. Responsible for energy coupling to the transport system. This is Thiamine import ATP-binding protein ThiQ from Salmonella paratyphi A (strain ATCC 9150 / SARB42).